Consider the following 49-residue polypeptide: U6-myrmicitoxin-Mri1a (49 aa).

An N-terminal signal peptide occupies residues 1 to 27 (MNPKALCSFLLATFLLLTVTIMPSVHA). Residues 28–35 (NAEANADA) constitute a propeptide that is removed on maturation.

Contains 1 disulfide bond. As to expression, expressed by the venom gland.

It localises to the secreted. This Manica rubida (European giant red ant) protein is U6-myrmicitoxin-Mri1a.